Reading from the N-terminus, the 378-residue chain is Carbamoyl phosphate synthase small chain (378 aa).

Positions 1-189 (MTKPAILALA…DSHPEIPAGE (189 aa)) are CPSase. Ser47, Gly241, and Gly243 together coordinate L-glutamine. The Glutamine amidotransferase type-1 domain maps to 193–378 (HVVAYDYGVK…RFISAMAERR (186 aa)). Cys269 acts as the Nucleophile in catalysis. Leu270, Gln273, Asn311, Gly313, and Phe314 together coordinate L-glutamine. Residues His353 and Glu355 contribute to the active site.

The protein belongs to the CarA family. Composed of two chains; the small (or glutamine) chain promotes the hydrolysis of glutamine to ammonia, which is used by the large (or ammonia) chain to synthesize carbamoyl phosphate. Tetramer of heterodimers (alpha,beta)4.

The catalysed reaction is hydrogencarbonate + L-glutamine + 2 ATP + H2O = carbamoyl phosphate + L-glutamate + 2 ADP + phosphate + 2 H(+). The enzyme catalyses L-glutamine + H2O = L-glutamate + NH4(+). It functions in the pathway amino-acid biosynthesis; L-arginine biosynthesis; carbamoyl phosphate from bicarbonate: step 1/1. Its pathway is pyrimidine metabolism; UMP biosynthesis via de novo pathway; (S)-dihydroorotate from bicarbonate: step 1/3. Its function is as follows. Small subunit of the glutamine-dependent carbamoyl phosphate synthetase (CPSase). CPSase catalyzes the formation of carbamoyl phosphate from the ammonia moiety of glutamine, carbonate, and phosphate donated by ATP, constituting the first step of 2 biosynthetic pathways, one leading to arginine and/or urea and the other to pyrimidine nucleotides. The small subunit (glutamine amidotransferase) binds and cleaves glutamine to supply the large subunit with the substrate ammonia. The chain is Carbamoyl phosphate synthase small chain from Pseudomonas aeruginosa (strain ATCC 15692 / DSM 22644 / CIP 104116 / JCM 14847 / LMG 12228 / 1C / PRS 101 / PAO1).